The chain runs to 128 residues: Small ribosomal subunit protein uS9 (128 aa).

Over residues 97–113 (RSEGFMTRDPRSVERKK) the composition is skewed to basic and acidic residues. The segment at 97–128 (RSEGFMTRDPRSVERKKPGQPKARRRFQFSKR) is disordered. Basic residues predominate over residues 114–128 (PGQPKARRRFQFSKR).

It belongs to the universal ribosomal protein uS9 family.

The polypeptide is Small ribosomal subunit protein uS9 (Bacteroides fragilis (strain ATCC 25285 / DSM 2151 / CCUG 4856 / JCM 11019 / LMG 10263 / NCTC 9343 / Onslow / VPI 2553 / EN-2)).